A 301-amino-acid chain; its full sequence is ATP synthase gamma chain (301 aa).

Belongs to the ATPase gamma chain family. In terms of assembly, F-type ATPases have 2 components, CF(1) - the catalytic core - and CF(0) - the membrane proton channel. CF(1) has five subunits: alpha(3), beta(3), gamma(1), delta(1), epsilon(1). CF(0) has three main subunits: a, b and c.

The protein resides in the cell inner membrane. In terms of biological role, produces ATP from ADP in the presence of a proton gradient across the membrane. The gamma chain is believed to be important in regulating ATPase activity and the flow of protons through the CF(0) complex. The sequence is that of ATP synthase gamma chain from Helicobacter acinonychis (strain Sheeba).